Reading from the N-terminus, the 395-residue chain is S-adenosylmethionine synthase (395 aa).

His-16 lines the ATP pocket. Asp-18 contacts Mg(2+). Glu-44 lines the K(+) pocket. L-methionine contacts are provided by Glu-57 and Gln-100. The segment at 100–110 is flexible loop; that stretch reads QSPDIAGGVNL. Residues 175–177, 242–243, Asp-251, 257–258, Ala-274, and Lys-278 contribute to the ATP site; these read DGK, RF, and RK. Asp-251 lines the L-methionine pocket. Lys-282 serves as a coordination point for L-methionine.

The protein belongs to the AdoMet synthase family. As to quaternary structure, homotetramer; dimer of dimers. Mg(2+) is required as a cofactor. It depends on K(+) as a cofactor.

Its subcellular location is the cytoplasm. It carries out the reaction L-methionine + ATP + H2O = S-adenosyl-L-methionine + phosphate + diphosphate. Its pathway is amino-acid biosynthesis; S-adenosyl-L-methionine biosynthesis; S-adenosyl-L-methionine from L-methionine: step 1/1. Catalyzes the formation of S-adenosylmethionine (AdoMet) from methionine and ATP. The overall synthetic reaction is composed of two sequential steps, AdoMet formation and the subsequent tripolyphosphate hydrolysis which occurs prior to release of AdoMet from the enzyme. The protein is S-adenosylmethionine synthase of Thermus thermophilus (strain ATCC BAA-163 / DSM 7039 / HB27).